Reading from the N-terminus, the 122-residue chain is Small ribosomal subunit protein uS13 (122 aa).

Positions 91 to 122 (RHRRGLPVHGQRTKTNARTRKGPKRTVAGKKK) are disordered.

It belongs to the universal ribosomal protein uS13 family. As to quaternary structure, part of the 30S ribosomal subunit. Forms a loose heterodimer with protein S19. Forms two bridges to the 50S subunit in the 70S ribosome.

Its function is as follows. Located at the top of the head of the 30S subunit, it contacts several helices of the 16S rRNA. In the 70S ribosome it contacts the 23S rRNA (bridge B1a) and protein L5 of the 50S subunit (bridge B1b), connecting the 2 subunits; these bridges are implicated in subunit movement. Contacts the tRNAs in the A and P-sites. The protein is Small ribosomal subunit protein uS13 of Kocuria rhizophila (strain ATCC 9341 / DSM 348 / NBRC 103217 / DC2201).